The primary structure comprises 500 residues: Probable cytochrome P450 514A2 (500 aa).

Residues 4-24 (IYTIILTIIILVLIISIKDLF) traverse the membrane as a helical segment. Residue Cys446 coordinates heme.

This sequence belongs to the cytochrome P450 family. It depends on heme as a cofactor.

Its subcellular location is the membrane. The sequence is that of Probable cytochrome P450 514A2 (cyp514A2) from Dictyostelium discoideum (Social amoeba).